Here is a 722-residue protein sequence, read N- to C-terminus: Metal transporter cnnm-5 (722 aa).

An N-terminal signal peptide occupies residues 1-17 (MSLFLFAIFQLALGSPG). Residues 18–139 (APNGPNVPLQ…AAAAKYMGDE (122 aa)) are Extracellular-facing. Residues Asn102 and Asn114 are each glycosylated (N-linked (GlcNAc...) asparagine). The CNNM transmembrane domain maps to 132 to 318 (AAKYMGDEIV…AQNEREKTIL (187 aa)). The chain crosses the membrane as a helical span at residues 140 to 160 (IVFCFFCILMSAYASGMTLGY). Residues 161 to 196 (MKFSMIDLNTMLKIAEGDAAKKRVRRIMHFRRRSTQ) lie on the Cytoplasmic side of the membrane. The helical transmembrane segment at 197–217 (LVVTFSLFSSVFTVLFTTTCE) threads the bilayer. Residues 218–227 (KMLHGVSNED) lie on the Extracellular side of the membrane. A helical membrane pass occupies residues 228–248 (VLKMAVPALICLIFAEMIPQA). The Cytoplasmic portion of the chain corresponds to 249 to 257 (VCNSKFGFN). A helical membrane pass occupies residues 258-278 (LAASLWFVTVIIFFVTLPIAY). At 279 to 722 (PASLVLGRFL…ETTPFMEKQE (444 aa)) the chain is on the extracellular side. N-linked (GlcNAc...) asparagine glycans are attached at residues Asn320, Asn349, and Asn371. CBS domains lie at 333-396 (MVPI…LIDE) and 413-473 (TVKF…KIDE). Residues 584 to 607 (SQRSSSTVNSQQHRQQTTDNSRST) form a disordered region. N-linked (GlcNAc...) asparagine glycosylation is present at Asn639. Residues 686–722 (LNSRASTSTSTTPACRTPLSVDARSQDETTPFMEKQE) form a disordered region. Over residues 688–703 (SRASTSTSTTPACRTP) the composition is skewed to low complexity.

It belongs to the ACDP family.

It is found in the cell membrane. In terms of biological role, probable metal transporter. Probably acts redundantly with the other metal transport proteins cnnm-1, cnnm-2, cnnm-3 and cnnm-4 to regulate Mg(2+) homeostasis. This is Metal transporter cnnm-5 from Caenorhabditis elegans.